The chain runs to 478 residues: MSAQNYHAGLHQSSTQRPPKRPNTEHAQEPPKRALIGGQTTPSSSGGGQTPNGTNYELEVKQQLSNYQKLFDQATYPFIRDVSTYEKLNKIGQGTFGEVFKARCKNTGRMVALKKILMENEKEGFPITALREVKMLEQLKHPNITDLIEVCSAKSTGTTGSKDRATFYLVMALCAHDLAGLLSNPKIRMSLVHIKTMMKHLMSGLNKLHRSKILHRDMKAANVLISKDGILKLADFGLARPFVQRENGAGPRPLYTNRVVTLWYRPPELLLGDRQYGTKIDVWGAGCIMAEMWTRQPIMQGDTEQKQLQLISGLCGSINKDVWPNCVNMPLWSAMSSEPNSALPQGKYRILPNKMKNLMKFDAPDSKTDPFGKNVKQHDSATDDDALHLLEILLAIDPDKRPTSDEAEDDIWFFKDPVPMANVQDLMDTIPNSQFEYTVGKGAHANRGRHQNAQQRPNQQQARPSNAIPAGQYRDTIF.

The segment covering Met-1 to Arg-17 has biased composition (polar residues). Positions Met-1 to Asn-55 are disordered. The segment covering Pro-22–Lys-32 has biased composition (basic and acidic residues). One can recognise a Protein kinase domain in the interval Tyr-85–Phe-413. ATP-binding positions include Ile-91 to Val-99 and Lys-114. The active-site Proton acceptor is the Asp-217. A disordered region spans residues His-444–Phe-478. The segment covering Gln-451–Pro-464 has biased composition (low complexity).

This sequence belongs to the protein kinase superfamily. CMGC Ser/Thr protein kinase family. CDC2/CDKX subfamily. Associates with cyclin-T (cit-1.1 or cit-1.2) to form P-TEFb.

The protein resides in the nucleus. The catalysed reaction is L-seryl-[protein] + ATP = O-phospho-L-seryl-[protein] + ADP + H(+). It carries out the reaction L-threonyl-[protein] + ATP = O-phospho-L-threonyl-[protein] + ADP + H(+). It catalyses the reaction [DNA-directed RNA polymerase] + ATP = phospho-[DNA-directed RNA polymerase] + ADP + H(+). Functionally, essential member of the cyclin-dependent kinase pair (CDK9/cyclin-T) complex, also called positive transcription elongation factor B (P-TEFb), which is proposed to facilitate the transition from abortive to production elongation by phosphorylating the CTD (C-terminal domain) of the large subunit of RNA polymerase II (RNAP II) and spt-5. In Caenorhabditis elegans, this protein is Probable cyclin-dependent kinase 9 (cdk-9).